Consider the following 160-residue polypeptide: Phosphopantetheine adenylyltransferase (160 aa).

S11 serves as a coordination point for substrate. ATP is bound by residues 11–12 (SF) and H19. Residues K43, L75, and R89 each contribute to the substrate site. Residues 90–92 (GLR), E100, and 125–131 (YSFISSS) contribute to the ATP site.

It belongs to the bacterial CoaD family. As to quaternary structure, homohexamer. It depends on Mg(2+) as a cofactor.

It is found in the cytoplasm. It carries out the reaction (R)-4'-phosphopantetheine + ATP + H(+) = 3'-dephospho-CoA + diphosphate. It participates in cofactor biosynthesis; coenzyme A biosynthesis; CoA from (R)-pantothenate: step 4/5. Functionally, reversibly transfers an adenylyl group from ATP to 4'-phosphopantetheine, yielding dephospho-CoA (dPCoA) and pyrophosphate. The chain is Phosphopantetheine adenylyltransferase from Staphylococcus aureus (strain Mu3 / ATCC 700698).